A 360-amino-acid polypeptide reads, in one-letter code: Phospho-N-acetylmuramoyl-pentapeptide-transferase (360 aa).

10 helical membrane passes run 25–45 (RAILSVLTALVLSLWLGPTLI), 73–93 (TMGGVLILAAVLGSSLLWADL), 97–117 (YVWVVLLVTTGFGIVGFVDDY), 128–148 (LIAKWKYFWQSVIASVAAVYL), 168–188 (VMPQLGMLYMLMAYFVIVGTS), 199–219 (GLAIMPTIMVAAALGIFAYVS), 236–256 (TAELLVVCTAIVGAGLGFLWF), 262–282 (LVFMGDVGSLALGAALGIIAI), 288–308 (LVLFIMGGVFVMETLSVMLQV), and 338–358 (VIVRFWILSLIFVLIGLATLK).

It belongs to the glycosyltransferase 4 family. MraY subfamily. Mg(2+) is required as a cofactor.

Its subcellular location is the cell inner membrane. The catalysed reaction is UDP-N-acetyl-alpha-D-muramoyl-L-alanyl-gamma-D-glutamyl-meso-2,6-diaminopimeloyl-D-alanyl-D-alanine + di-trans,octa-cis-undecaprenyl phosphate = di-trans,octa-cis-undecaprenyl diphospho-N-acetyl-alpha-D-muramoyl-L-alanyl-D-glutamyl-meso-2,6-diaminopimeloyl-D-alanyl-D-alanine + UMP. Its pathway is cell wall biogenesis; peptidoglycan biosynthesis. In terms of biological role, catalyzes the initial step of the lipid cycle reactions in the biosynthesis of the cell wall peptidoglycan: transfers peptidoglycan precursor phospho-MurNAc-pentapeptide from UDP-MurNAc-pentapeptide onto the lipid carrier undecaprenyl phosphate, yielding undecaprenyl-pyrophosphoryl-MurNAc-pentapeptide, known as lipid I. The sequence is that of Phospho-N-acetylmuramoyl-pentapeptide-transferase from Idiomarina loihiensis (strain ATCC BAA-735 / DSM 15497 / L2-TR).